The primary structure comprises 220 residues: MKAVCVISGGMDSSTAAFIAKEQGYEILALHFDYNQRTMKKERECFNLICDDLGVKSREILDVSFIAQIGANSLTDKNLTIQKTGVKSGEIPNTYVPFRNGIFLSVAAAFAEKEGADALFIGVVEEDSSGYPDCSENFIKKIESAINAGTSPNFKLEIKIPLVHLSKTQIVKKALEIGVPLEHTWSCYEREDKACGFCDSCRLRLKGFKGADTKDTIPYI.

7-17 (ISGGMDSSTAA) serves as a coordination point for ATP. Residues cysteine 187, cysteine 195, cysteine 198, and cysteine 201 each contribute to the Zn(2+) site.

It belongs to the QueC family. Zn(2+) serves as cofactor.

It carries out the reaction 7-carboxy-7-deazaguanine + NH4(+) + ATP = 7-cyano-7-deazaguanine + ADP + phosphate + H2O + H(+). It functions in the pathway purine metabolism; 7-cyano-7-deazaguanine biosynthesis. Functionally, catalyzes the ATP-dependent conversion of 7-carboxy-7-deazaguanine (CDG) to 7-cyano-7-deazaguanine (preQ(0)). The polypeptide is 7-cyano-7-deazaguanine synthase (Campylobacter hominis (strain ATCC BAA-381 / DSM 21671 / CCUG 45161 / LMG 19568 / NCTC 13146 / CH001A)).